The chain runs to 597 residues: Elongation factor 4 (597 aa).

Residues 2–184 form the tr-type G domain; the sequence is DHIRNFSIIA…SLIAKVPPPK (183 aa). GTP-binding positions include 14–19 and 131–134; these read DHGKST and NKID.

The protein belongs to the TRAFAC class translation factor GTPase superfamily. Classic translation factor GTPase family. LepA subfamily.

Its subcellular location is the cell inner membrane. It carries out the reaction GTP + H2O = GDP + phosphate + H(+). Required for accurate and efficient protein synthesis under certain stress conditions. May act as a fidelity factor of the translation reaction, by catalyzing a one-codon backward translocation of tRNAs on improperly translocated ribosomes. Back-translocation proceeds from a post-translocation (POST) complex to a pre-translocation (PRE) complex, thus giving elongation factor G a second chance to translocate the tRNAs correctly. Binds to ribosomes in a GTP-dependent manner. This is Elongation factor 4 from Burkholderia cenocepacia (strain HI2424).